Here is a 434-residue protein sequence, read N- to C-terminus: MKVFSHQDEVEFISDDSRECTPKSAFLLTQSSRVYEAAAREKGCKLFLEPKDLHRFLKTDIPLIGVTGTNGKTTTSAAIYSILLDLGYKVALLGTRGFFMNDELIEPKGLTTPPLLELYERIDRAKRAGCDFFVMEVSSHAIDQKRIEGLNFALKILTNITSDHLDYHKSLEHYIQTKNSFFDDSTPKLINKDESKAKFNLQNALSYGIEHPSSYHVKAYSLHGGIEARIAFLEKEASLSSSLFGKHNLYNLLAAVSAVHRLIGGELQEICDMAERFGGVEGRMERVSEEPLVVVDFAHTEDGMRQIFESFPHQEIVVLFGAGGDRDRSKRPKMGAVADRYAKRIYLTSDNPRSEDPLLIIEEIEKGIHHCQKCVKEPDRVQAIRRAVKELEAQEVLLILGKGDEAEQIIGSQKIPMKDRETVLSALGEIRGVR.

Serine 17 is a UDP-N-acetyl-alpha-D-muramoyl-L-alanyl-D-glutamate binding site. ATP is bound at residue 68-74 (GTNGKTT). UDP-N-acetyl-alpha-D-muramoyl-L-alanyl-D-glutamate-binding positions include 111–112 (TT), serine 138, glutamine 144, and arginine 146. An N6-carboxylysine modification is found at lysine 178. Meso-2,6-diaminopimelate contacts are provided by residues arginine 326, 350-353 (DNPR), glycine 401, and glutamate 405. Residues 350–353 (DNPR) carry the Meso-diaminopimelate recognition motif motif.

The protein belongs to the MurCDEF family. MurE subfamily. Mg(2+) is required as a cofactor. Carboxylation is probably crucial for Mg(2+) binding and, consequently, for the gamma-phosphate positioning of ATP.

Its subcellular location is the cytoplasm. It catalyses the reaction UDP-N-acetyl-alpha-D-muramoyl-L-alanyl-D-glutamate + meso-2,6-diaminopimelate + ATP = UDP-N-acetyl-alpha-D-muramoyl-L-alanyl-gamma-D-glutamyl-meso-2,6-diaminopimelate + ADP + phosphate + H(+). Its pathway is cell wall biogenesis; peptidoglycan biosynthesis. Its function is as follows. Catalyzes the addition of meso-diaminopimelic acid to the nucleotide precursor UDP-N-acetylmuramoyl-L-alanyl-D-glutamate (UMAG) in the biosynthesis of bacterial cell-wall peptidoglycan. The sequence is that of UDP-N-acetylmuramoyl-L-alanyl-D-glutamate--2,6-diaminopimelate ligase from Wolinella succinogenes (strain ATCC 29543 / DSM 1740 / CCUG 13145 / JCM 31913 / LMG 7466 / NCTC 11488 / FDC 602W) (Vibrio succinogenes).